Reading from the N-terminus, the 315-residue chain is MTLHLTRQGATLRLRQGRLLLEEEGREVAGFPARQVRSVALWGNVRLSTPALVFLLRQGVPVFFYSLEGFLHGVAGAYPDPHPAHLRAQFAAEGLPLARAFVVGKLRSALALLERHRLPEAGGVVEALARAEGASELERLRGAEGEGSRVYFQGLARLLGPYGFGGRTRRPPRDPVNAALSYGYALLLGRVLVAVRLAGLHPEVGFLHAEGRRSPALALDLMEEFRVPVVDQVVLSAFRRGLLTPSHAEVREGGVYLNEEGRRRLIQLFEERLLEGVSHPLGFRKPLGETIEVQAQRLKAALLGRGRYTPFYLWR.

Residues Glu144, His208, and Glu223 each contribute to the Mn(2+) site.

The protein belongs to the CRISPR-associated endonuclease Cas1 family. Homodimer, forms a heterotetramer with a Cas2 homodimer. Requires Mg(2+) as cofactor. The cofactor is Mn(2+).

Its function is as follows. CRISPR (clustered regularly interspaced short palindromic repeat), is an adaptive immune system that provides protection against mobile genetic elements (viruses, transposable elements and conjugative plasmids). CRISPR clusters contain spacers, sequences complementary to antecedent mobile elements, and target invading nucleic acids. CRISPR clusters are transcribed and processed into CRISPR RNA (crRNA). Acts as a dsDNA endonuclease. Involved in the integration of spacer DNA into the CRISPR cassette. The polypeptide is CRISPR-associated endonuclease Cas1 1 (Thermus thermophilus (strain ATCC 27634 / DSM 579 / HB8)).